The chain runs to 352 residues: Ion-translocating oxidoreductase complex subunit D (352 aa).

The next 5 helical transmembrane spans lie at 20-40, 42-62, 78-109, 123-143, and 148-168; these read IMLLVLLAAVPGIAAQLWFFG, GTLVQILLASVSALLAEALVL, ALLTGLLLAVSIPPLAPWWMVVLGTVFAVIIA, PAMIGYVVLLISFPVQMTSWL, and IAVNIPGFIDAIQVIFSGHTA. FMN phosphoryl threonine is present on T187. The next 5 membrane-spanning stretches (helical) occupy residues 214–234, 242–262, 267–287, 301–321, and 322–342; these read ILAGAGWQWVNLAWLAGGLWL, WHIPLSFLVTLALCATLGWLF, LAAPQIHLLSGATMLGAFFIL, LIFGALAGLLVWLIRSFGGYP, and DGVAFAVLLANITVPLIDYYT.

The protein belongs to the NqrB/RnfD family. The complex is composed of six subunits: RsxA, RsxB, RsxC, RsxD, RsxE and RsxG. The cofactor is FMN.

It localises to the cell inner membrane. Its function is as follows. Part of a membrane-bound complex that couples electron transfer with translocation of ions across the membrane. Required to maintain the reduced state of SoxR. This chain is Ion-translocating oxidoreductase complex subunit D, found in Escherichia coli (strain SE11).